We begin with the raw amino-acid sequence, 514 residues long: Threonine synthase (514 aa).

At lysine 117 the chain carries N6-(pyridoxal phosphate)lysine. Residues glycine 270, asparagine 271, phenylalanine 272, and aspartate 274 each coordinate pyridoxal 5'-phosphate. Phosphoserine occurs at positions 319 and 321. Threonine 449 provides a ligand contact to pyridoxal 5'-phosphate.

Belongs to the threonine synthase family. The cofactor is pyridoxal 5'-phosphate.

It carries out the reaction O-phospho-L-homoserine + H2O = L-threonine + phosphate. The protein operates within amino-acid biosynthesis; L-threonine biosynthesis; L-threonine from L-aspartate: step 5/5. Functionally, catalyzes the gamma-elimination of phosphate from L-phosphohomoserine and the beta-addition of water to produce L-threonine. This chain is Threonine synthase (thrc), found in Schizosaccharomyces pombe (strain 972 / ATCC 24843) (Fission yeast).